The chain runs to 408 residues: S-adenosylmethionine synthase (408 aa).

H16 is an ATP binding site. D18 lines the Mg(2+) pocket. A K(+)-binding site is contributed by E44. 2 residues coordinate L-methionine: E57 and Q100. The tract at residues 100–110 (QSPEINQGVSR) is flexible loop. ATP-binding positions include 177–179 (DGK), D257, 263–264 (RK), A280, and K284. D257 contacts L-methionine. Residue K288 coordinates L-methionine.

This sequence belongs to the AdoMet synthase family. As to quaternary structure, homotetramer; dimer of dimers. Requires Mg(2+) as cofactor. It depends on K(+) as a cofactor.

The protein localises to the cytoplasm. The catalysed reaction is L-methionine + ATP + H2O = S-adenosyl-L-methionine + phosphate + diphosphate. It functions in the pathway amino-acid biosynthesis; S-adenosyl-L-methionine biosynthesis; S-adenosyl-L-methionine from L-methionine: step 1/1. Catalyzes the formation of S-adenosylmethionine (AdoMet) from methionine and ATP. The overall synthetic reaction is composed of two sequential steps, AdoMet formation and the subsequent tripolyphosphate hydrolysis which occurs prior to release of AdoMet from the enzyme. The sequence is that of S-adenosylmethionine synthase from Bifidobacterium animalis subsp. lactis (strain AD011).